The primary structure comprises 383 residues: Probable cell wall hydrolase LytN (383 aa).

Positions 1-49 are cleaved as a signal peptide; sequence MFVYYCKECFIMNKQQSKVRYSIRKVSIGILSISIGMFLALGMSNKAYA. The region spanning 175–219 is the LysM domain; the sequence is QIYTVKKGDTLSAIALKYKTTVSNIQNTNNIANPNLIFIGQKLKV. The region spanning 241–378 is the Peptidase C51 domain; that stretch reads NSSTLNYLKT…NYENDMIFIR (138 aa).

Its subcellular location is the secreted. Probably involved in peptidoglycan hydrolysis. The chain is Probable cell wall hydrolase LytN (lytN) from Staphylococcus aureus (strain MSSA476).